Here is a 549-residue protein sequence, read N- to C-terminus: MPVDLGQALGLLPSLAKAEDSQFSESDAALQEELSSPETARQLFRQFRYQVMSGPHETLKQLRKLCFQWLQPEVHTKEQILEILMLEQFLTILPGEIQMWVRKQCPGSGEEAVTLVESLKGDPQRLWQWISIQVLGQDILSEKMESPSCQVGEVEPHLEVVPQELGLENSSSGPGELLSHIVKEESDTEAELALAASQPARLEERLIRDQDLGASLLPAAPQEQWRQLDSTQKEQYWDLMLETYGKMVSGAGISHPKSDLTNSIEFGEELAGIYLHVNEKIPRPTCIGDRQENDKENLNLENHRDQELLHASCQASGEVPSQASLRGFFTEDEPGCFGEGENLPEALQNIQDEGTGEQLSPQERISEKQLGQHLPNPHSGEMSTMWLEEKRETSQKGQPRAPMAQKLPTCRECGKTFYRNSQLIFHQRTHTGETYFQCTICKKAFLRSSDFVKHQRTHTGEKPCKCDYCGKGFSDFSGLRHHEKIHTGEKPYKCPICEKSFIQRSNFNRHQRVHTGEKPYKCSHCGKSFSWSSSLDKHQRSHLGKKPFQ.

Positions Arg41–Pro123 constitute an SCAN box domain. In terms of domain architecture, KRAB spans Asp211–Arg283. 5 C2H2-type zinc fingers span residues Pro408–His430, Phe436–His458, Cys464–His486, Tyr492–His514, and Tyr520–His542.

It belongs to the krueppel C2H2-type zinc-finger protein family.

The protein resides in the nucleus. In terms of biological role, may be involved in transcriptional regulation. The sequence is that of Zinc finger protein 18 (ZNF18) from Homo sapiens (Human).